We begin with the raw amino-acid sequence, 630 residues long: Betaine/ectoine transporter LcoP (630 aa).

Residues 1-13 (MSTNSGNNLPESQ) are compositionally biased toward polar residues. The disordered stretch occupies residues 1–28 (MSTNSGNNLPESQESPEEPHYPHDTHPG). Residues 17-26 (EEPHYPHDTH) are compositionally biased toward basic and acidic residues. 12 consecutive transmembrane segments (helical) span residues 47 to 67 (TVFG…ISSP), 85 to 105 (TGWL…YIAF), 125 to 145 (FSWI…FFGP), 177 to 197 (FHWG…LAYS), 230 to 250 (MAII…AIQV), 267 to 287 (ILIA…VSGV), 299 to 319 (ISLT…LFLL), 354 to 374 (WTAF…MFIA), 385 to 405 (FALI…TIFG), 436 to 456 (LPLY…FFVT), 479 to 499 (LIVV…LLTG), and 510 to 530 (LTIL…IAFI). Residues 611 to 630 (WADGWTPESTEEGEVDAKKD) are disordered.

Belongs to the BCCT transporter (TC 2.A.15) family.

Its subcellular location is the cell membrane. With respect to regulation, uptake is activated by hyperosmotic stress. Shows a small but significant chill stimulation around 15 degrees Celsius. Involved in the uptake of osmoprotectants. Can transport betaine and ectoine. Na(+) is probably the coupling ion. The sequence is that of Betaine/ectoine transporter LcoP from Corynebacterium glutamicum (strain ATCC 13032 / DSM 20300 / JCM 1318 / BCRC 11384 / CCUG 27702 / LMG 3730 / NBRC 12168 / NCIMB 10025 / NRRL B-2784 / 534).